Consider the following 436-residue polypeptide: Eukaryotic peptide chain release factor subunit 1-1 (436 aa).

Belongs to the eukaryotic release factor 1 family. In terms of assembly, heterodimer of two subunits, one of which binds GTP.

Its subcellular location is the cytoplasm. Its function is as follows. Directs the termination of nascent peptide synthesis (translation) in response to the termination codons UAA, UAG and UGA. Modulates plant growth and development. The sequence is that of Eukaryotic peptide chain release factor subunit 1-1 (ERF1-1) from Arabidopsis thaliana (Mouse-ear cress).